The sequence spans 60 residues: Protein MGF 360-5L (60 aa).

The protein belongs to the asfivirus MGF 360 family.

Plays a role in virus cell tropism, and may be required for efficient virus replication in macrophages. The chain is Protein MGF 360-5L from Ornithodoros (relapsing fever ticks).